We begin with the raw amino-acid sequence, 277 residues long: Cell wall protein PGA30 (277 aa).

Positions 1–18 (MKYFTIATVLTLASSALA) are cleaved as a signal peptide. Residues asparagine 129 and asparagine 178 are each glycosylated (N-linked (GlcNAc...) asparagine). Residues 219 to 246 (VLPSSSTEAPPKTSVAAPSTTAEAQTTA) form a disordered region. Residues 234-246 (AAPSTTAEAQTTA) are compositionally biased toward polar residues. Glycine 253 carries the GPI-anchor amidated glycine lipid modification. Positions 254–277 (GANEIVGGGSMAIALAAAAIGLVI) are cleaved as a propeptide — removed in mature form.

It belongs to the SRP1/TIP1 family. In terms of processing, the GPI-anchor is attached to the protein in the endoplasmic reticulum and serves to target the protein to the cell surface. There, the glucosamine-inositol phospholipid moiety is cleaved off and the GPI-modified mannoprotein is covalently attached via its lipidless GPI glycan remnant to the 1,6-beta-glucan of the outer cell wall layer.

It localises to the secreted. The protein localises to the cell wall. It is found in the membrane. Functionally, component of the cell wall involved in virulence which plays a role in the relationship between C.albicans and the host. The polypeptide is Cell wall protein PGA30 (PGA30) (Candida albicans (strain SC5314 / ATCC MYA-2876) (Yeast)).